Here is a 63-residue protein sequence, read N- to C-terminus: Large ribosomal subunit protein uL29 (63 aa).

It belongs to the universal ribosomal protein uL29 family.

The sequence is that of Large ribosomal subunit protein uL29 from Tolumonas auensis (strain DSM 9187 / NBRC 110442 / TA 4).